The chain runs to 714 residues: Ribonucleoside-diphosphate reductase 2 subunit alpha (714 aa).

Residues T161, 177 to 178 (SC), G206, 386 to 390 (NLCSE), and 588 to 592 (PTGSI) contribute to the substrate site. A disulfide bridge connects residues C178 and C415. N386 acts as the Proton acceptor in catalysis. Residue C388 is the Cysteine radical intermediate of the active site. E390 functions as the Proton acceptor in the catalytic mechanism.

This sequence belongs to the ribonucleoside diphosphate reductase large chain family. Tetramer of two alpha and two beta subunits.

The enzyme catalyses a 2'-deoxyribonucleoside 5'-diphosphate + [thioredoxin]-disulfide + H2O = a ribonucleoside 5'-diphosphate + [thioredoxin]-dithiol. Its activity is regulated as follows. Under complex allosteric control mediated by deoxynucleoside triphosphates and ATP binding. The type of nucleotide bound at the specificity site determines substrate preference. It seems probable that ATP makes the enzyme reduce CDP and UDP, dGTP favors ADP reduction and dTTP favors GDP reduction. Lacks the N-terminal activity site. In terms of biological role, provides the precursors necessary for DNA synthesis. Catalyzes the biosynthesis of deoxyribonucleotides from the corresponding ribonucleotides. R1E contains the binding sites for both substrates and allosteric effectors and carries out the actual reduction of the ribonucleotide. This is Ribonucleoside-diphosphate reductase 2 subunit alpha (nrdE) from Salmonella typhimurium (strain LT2 / SGSC1412 / ATCC 700720).